The sequence spans 201 residues: Probable chemoreceptor glutamine deamidase CheD 1 (201 aa).

The protein belongs to the CheD family.

The enzyme catalyses L-glutaminyl-[protein] + H2O = L-glutamyl-[protein] + NH4(+). Its function is as follows. Probably deamidates glutamine residues to glutamate on methyl-accepting chemotaxis receptors (MCPs), playing an important role in chemotaxis. This chain is Probable chemoreceptor glutamine deamidase CheD 1, found in Dechloromonas aromatica (strain RCB).